The following is a 296-amino-acid chain: Phosphatidylglycerol--prolipoprotein diacylglyceryl transferase (296 aa).

Transmembrane regions (helical) follow at residues 17 to 37 (LAVRWYGLMYLVGFIAAIVVG), 59 to 79 (MMFYGVLGTVLGGRLGYVLFY), 97 to 117 (GGMSFHGGFLGVTLAMVLFAW), 129 to 149 (FVAPMVPAGLAAGRLGNFING), 203 to 223 (PSQLYEIALEGIALFFVLFFF), 230 to 250 (LGAVSALFLIGYGLARFTVEF), and 265 to 285 (LSMGQWLSLPMILAGIALLVW). R142 provides a ligand contact to a 1,2-diacyl-sn-glycero-3-phospho-(1'-sn-glycerol).

The protein belongs to the Lgt family.

The protein resides in the cell inner membrane. The enzyme catalyses L-cysteinyl-[prolipoprotein] + a 1,2-diacyl-sn-glycero-3-phospho-(1'-sn-glycerol) = an S-1,2-diacyl-sn-glyceryl-L-cysteinyl-[prolipoprotein] + sn-glycerol 1-phosphate + H(+). It participates in protein modification; lipoprotein biosynthesis (diacylglyceryl transfer). Its function is as follows. Catalyzes the transfer of the diacylglyceryl group from phosphatidylglycerol to the sulfhydryl group of the N-terminal cysteine of a prolipoprotein, the first step in the formation of mature lipoproteins. This Burkholderia ambifaria (strain MC40-6) protein is Phosphatidylglycerol--prolipoprotein diacylglyceryl transferase.